Here is a 523-residue protein sequence, read N- to C-terminus: Synaptotagmin-10 (523 aa).

Residues 1–55 (MSFHKEDGVNSLCQKALHIVTELCFAGQVEWEKCSGIFPRDRGSQGGSSTDISVS) lie on the Vesicular side of the membrane. Positions 13–35 (CQKALHIVTELCFAGQVEWEKCS) are cysteine motif. The chain crosses the membrane as a helical span at residues 56–76 (LLAVVVSFCGLALLVVSLFVF). Residues 77-523 (WKLCWPCWKS…CPSPKPPSTP (447 aa)) lie on the Cytoplasmic side of the membrane. Position 136 is a phosphothreonine (threonine 136). 2 consecutive C2 domains span residues 231 to 352 (ICGK…TVWK) and 363 to 496 (DLGE…THWH). Ca(2+) is bound by residues aspartate 262, aspartate 268, aspartate 320, phenylalanine 321, aspartate 322, serine 325, aspartate 328, aspartate 394, aspartate 400, aspartate 454, and aspartate 456.

The protein belongs to the synaptotagmin family. As to quaternary structure, homodimer; disulfide-linked via the cysteine motif. Can also form heterodimers with SYT3, SYT6, SYT7 and SYT9. The cofactor is Ca(2+). In terms of tissue distribution, expressed only in pancreas, lung and kidney.

It localises to the cytoplasmic vesicle. The protein resides in the secretory vesicle membrane. In terms of biological role, ca(2+) sensor specifically required for the Ca(2+)-dependent exocytosis of secretory vesicles containing IGF1 in neurons of the olfactory bulb. Exocytosis of IGF1 is required for sensory perception of smell. Not involved in Ca(2+)-dependent synaptic vesicle exocytosis. Acts through Ca(2+) and phospholipid binding to the C2 domain: Ca(2+) induces binding of the C2-domains to phospholipid membranes and to assembled SNARE-complexes; both actions contribute to triggering exocytosis. This is Synaptotagmin-10 (SYT10) from Homo sapiens (Human).